Here is a 546-residue protein sequence, read N- to C-terminus: Capsid protein VP1 (546 aa).

The tract at residues 1–38 (MMMASKDAPQSADGASGAGQLVPEVNTADPLPMEPVAG) is disordered. Residues 1 to 226 (MMMASKDAPQ…FLFLVPPTIE (226 aa)) form a shell domain region. The tract at residues 227–279 (QKTRAFTVPNIPLQTLSNSRFPSLIQGMILSPDASQVVQFQNGRCLIDGQLLG) is P1 sub-domain 1. The segment at 227 to 545 (QKTRAFTVPN…TARGRLGVRR (319 aa)) is protruding domain. Residues 280-416 (TTPATSGQLF…GSSLSQAANL (137 aa)) are P2 sub-domain. A P1 sub-domain 2 region spans residues 417–546 (APPVFPPGFG…ARGRLGVRRI (130 aa)). The tract at residues 538–545 (RGRLGVRR) is plays a role in binding to host histo-blood group structures antigens and in the formation of P-particles.

The protein belongs to the caliciviridae capsid protein family. As to quaternary structure, homodimer. Homomultimer. Interacts with the minor capsid protein VP2. Interacts (via C-terminus) with host type I histo-blood group structures antigens at the surface of target cells. Post-translationally, may be cleaved by host protease to generate soluble capsid protein. Assembled capsid cannot be cleaved.

Its subcellular location is the virion. It is found in the host cytoplasm. Its function is as follows. Capsid protein self assembles to form an icosahedral capsid with a T=3 symmetry, about 38 nm in diameter, and consisting of 180 capsid proteins. A smaller form of capsid with a diameter of 23 nm might be capsid proteins assembled as icosahedron with T=1 symmetry. The capsid encapsulates the genomic RNA and is decorated with VP2 proteins. Attaches virion to target cells by binding histo-blood group antigens (HBGAs) present on gastroduodenal epithelial cells. The soluble capsid protein may play a role in viral immunoevasion. This Southampton virus (strain GI/Human/United Kingdom/Southampton/1991) (SHV) protein is Capsid protein VP1.